Consider the following 427-residue polypeptide: Serine--tRNA ligase (427 aa).

231-233 is a binding site for L-serine; sequence TAE. 262 to 264 lines the ATP pocket; it reads RSE. An L-serine-binding site is contributed by Glu285. ATP is bound at residue 349–352; sequence EISS. Ser385 serves as a coordination point for L-serine.

Belongs to the class-II aminoacyl-tRNA synthetase family. Type-1 seryl-tRNA synthetase subfamily. Homodimer. The tRNA molecule binds across the dimer.

The protein localises to the cytoplasm. The enzyme catalyses tRNA(Ser) + L-serine + ATP = L-seryl-tRNA(Ser) + AMP + diphosphate + H(+). It carries out the reaction tRNA(Sec) + L-serine + ATP = L-seryl-tRNA(Sec) + AMP + diphosphate + H(+). Its pathway is aminoacyl-tRNA biosynthesis; selenocysteinyl-tRNA(Sec) biosynthesis; L-seryl-tRNA(Sec) from L-serine and tRNA(Sec): step 1/1. Catalyzes the attachment of serine to tRNA(Ser). Is also able to aminoacylate tRNA(Sec) with serine, to form the misacylated tRNA L-seryl-tRNA(Sec), which will be further converted into selenocysteinyl-tRNA(Sec). The sequence is that of Serine--tRNA ligase from Listeria monocytogenes serotype 4b (strain CLIP80459).